The chain runs to 807 residues: Putative transmembrane protein ORF807 (807 aa).

The next 5 helical transmembrane spans lie at 210 to 230, 234 to 254, 270 to 290, 459 to 479, and 657 to 677; these read VLML…SDIL, GLST…IVYF, VTIQ…FVIL, ILIG…LVLT, and VALL…MPLV.

Its subcellular location is the host membrane. The sequence is that of Putative transmembrane protein ORF807 from Acidianus filamentous virus 1 (isolate United States/Yellowstone) (AFV-1).